The following is a 185-amino-acid chain: Calcium-binding protein K-like (185 aa).

2 consecutive EF-hand domains span residues 60–95 (WDEA…MTRA) and 96–131 (PTTD…VVVC). Residues D73, D75, N77, E84, D109, D111, S113, Y115, and E120 each contribute to the Ca(2+) site.

It belongs to the recoverin family.

In Dictyostelium discoideum (Social amoeba), this protein is Calcium-binding protein K-like.